The following is a 122-amino-acid chain: Large ribosomal subunit protein uL14 (122 aa).

It belongs to the universal ribosomal protein uL14 family. As to quaternary structure, part of the 50S ribosomal subunit. Forms a cluster with proteins L3 and L19. In the 70S ribosome, L14 and L19 interact and together make contacts with the 16S rRNA in bridges B5 and B8.

Functionally, binds to 23S rRNA. Forms part of two intersubunit bridges in the 70S ribosome. The polypeptide is Large ribosomal subunit protein uL14 (Rhodococcus erythropolis (strain PR4 / NBRC 100887)).